The sequence spans 241 residues: MRSGVIAQKVGMTRVFTEAGEHIPVTVLKLGNCQVLGHRTKEKNGYVALQVGSGSRKTVYMPKAERGQFAAAKVEPKRKVEEFRVSEDALLPVGAEIQADHFVVGQFVDVTGTSTGKGFAGGMKRWNFGGLRATHGVSVSHRSIGSTGGRQDPGKTFKNKKMPGHMGVDRVTTLNLRVVQTDVERGLILVEGAVPGTKGGWIRVRDAVKKALPADAPKPGKFRLANGDAAAEAPAAEQEGA.

Disordered regions lie at residues 139-166 and 214-241; these read VSHR…PGHM and ADAP…QEGA. Gln151 bears the N5-methylglutamine mark. Over residues 229–241 the composition is skewed to low complexity; that stretch reads AAAEAPAAEQEGA.

As to quaternary structure, part of the 50S ribosomal subunit. Forms a cluster with proteins L14 and L19. Post-translationally, methylated, on either Lys-155 or Lys-158. Methylated by PrmB.

Its function is as follows. One of the primary rRNA binding proteins, it binds directly near the 3'-end of the 23S rRNA, where it nucleates assembly of the 50S subunit. The sequence is that of Large ribosomal subunit protein uL3 from Rhodopseudomonas palustris (strain ATCC BAA-98 / CGA009).